Reading from the N-terminus, the 105-residue chain is DNA-directed RNA polymerase subunit Rpo13 (105 aa).

Composition is skewed to basic and acidic residues over residues 1 to 10 (MSEDDSKKEP) and 70 to 80 (FDDVARSYSKA). Disordered regions lie at residues 1–35 (MSEDDSKKEPEPEETEAEIKHEEISREEDDEGGEF) and 70–105 (FDDVARSYSKADKKKRRVEKKPKKGKVTKKSDEEEE). Positions 81 to 97 (DKKKRRVEKKPKKGKVT) are enriched in basic residues.

Belongs to the archaeal Rpo13 RNA polymerase subunit family. In terms of assembly, part of the 13-subunit RNA polymerase.

It is found in the cytoplasm. It catalyses the reaction RNA(n) + a ribonucleoside 5'-triphosphate = RNA(n+1) + diphosphate. DNA-dependent RNA polymerase catalyzes the transcription of DNA into RNA using the four ribonucleoside triphosphates as substrates. In vitro binds dsDNA but not ssDNA. This chain is DNA-directed RNA polymerase subunit Rpo13, found in Sulfolobus acidocaldarius (strain ATCC 33909 / DSM 639 / JCM 8929 / NBRC 15157 / NCIMB 11770).